The sequence spans 243 residues: Terpene cyclase dpmpB (243 aa).

7 consecutive transmembrane segments (helical) span residues 13–33 (FLEVAWLADACKLLMGVGWTA), 51–71 (ALMPLCCNFAWELVYALILPF), 78–98 (WVHVTGLAFNCGVMYTAIKFA), 112–132 (LTWIFIASVAGWMSAHLALAA), 141–161 (AWSAYGCQLLLSVGGLCQLLC), 169–189 (SYLLWFSRFFGSLVLIPQDIL), and 207–227 (LWFVSIFLILDGSYGILLWYV).

This sequence belongs to the paxB family.

It is found in the membrane. The protein operates within secondary metabolite biosynthesis; terpenoid biosynthesis. Functionally, terpene cyclase; part of the gene cluster that mediates the biosynthesis of diterpenoid pyrones. The first step of the pathway is the synthesis of the alpha-pyrone moiety by the polyketide synthase dpmpA via condensation of one acetyl-CoA starter unit with 3 malonyl-CoA units and 2 methylations. The alpha-pyrone is then combined with geranylgeranyl pyrophosphate (GGPP) formed by the GGPP synthase dpmpD through the action of the prenyltransferase dpmpC to yield a linear alpha-pyrone diterpenoid. Subsequent steps in the diterpenoid pyrone biosynthetic pathway involve the decalin core formation, which is initiated by the epoxidation of the C10-C11 olefin by the FAD-dependent oxidoreductase dpmpE, and is followed by a cyclization cascade catalyzed by the terpene cyclase dpmpB. The short chain dehydrogenase/reductase dpmpG then oxidizes the 8S hydroxy group to a ketone and the short chain dehydrogenase/reductase dpmpH reduces the ketone to the 8R hydroxy group to yield higginsianin B. Higginsianin B is further methylated by the methyltransferase dpmpI to produce the intermediate named FDDP B. The cytochrome P450 monooxygenase dpmpJ then oxidizes the C-26 methyl to primary alcohol, producing the final diterpenoid pyrone with a C-26 primary alcohol on the gamma-pyrone moiety named FDDP C. This is Terpene cyclase dpmpB from Macrophomina phaseolina (strain MS6) (Charcoal rot fungus).